A 237-amino-acid chain; its full sequence is Small ribosomal subunit protein uS2m (237 aa).

Belongs to the universal ribosomal protein uS2 family.

It is found in the mitochondrion. The protein is Small ribosomal subunit protein uS2m (RPS2) of Marchantia polymorpha (Common liverwort).